We begin with the raw amino-acid sequence, 134 residues long: Methylglyoxal synthase (134 aa).

One can recognise an MGS-like domain in the interval 1–134 (MNIALIAHDN…DWRERVKERG (134 aa)). Substrate contacts are provided by residues histidine 8, lysine 12, 34–37 (TGTT), and 54–55 (SG). Residue aspartate 60 is the Proton donor/acceptor of the active site. Histidine 87 serves as a coordination point for substrate.

It belongs to the methylglyoxal synthase family.

It catalyses the reaction dihydroxyacetone phosphate = methylglyoxal + phosphate. Catalyzes the formation of methylglyoxal from dihydroxyacetone phosphate. This chain is Methylglyoxal synthase, found in Alkaliphilus metalliredigens (strain QYMF).